A 357-amino-acid chain; its full sequence is Crh-like protein 1 (357 aa).

Residues 1-17 (MMLPLLAVSAFASLGAA) form the signal peptide. Positions 20–220 (YTSCNPTNSL…WAGGETDYDE (201 aa)) constitute a GH16 domain. Residues Asn52 and Asn92 are each glycosylated (N-linked (GlcNAc...) asparagine). The Nucleophile role is filled by Glu109. Glu113 functions as the Proton donor in the catalytic mechanism. Residue Glu113 participates in chitin binding. A glycan (N-linked (GlcNAc...) asparagine) is linked at Asn131. Lys193, Trp197, and Thr208 together coordinate chitin. 2 N-linked (GlcNAc...) asparagine glycosylation sites follow: Asn242 and Asn257. Residue Gly326 is the site of GPI-anchor amidated glycine attachment. Residues 327–357 (SASAVFTGAAVTNLPSFFFTVFFALAIALAF) constitute a propeptide, removed in mature form. A helical transmembrane segment spans residues 337–357 (VTNLPSFFFTVFFALAIALAF).

Belongs to the glycosyl hydrolase 16 family. CRH1 subfamily. In terms of processing, the GPI-like anchor contains a phosphoceramide lipid group. The anchor position has not been determined.

Its subcellular location is the cell membrane. The protein localises to the secreted. It is found in the cell wall. It carries out the reaction Random endo-hydrolysis of N-acetyl-beta-D-glucosaminide (1-&gt;4)-beta-linkages in chitin and chitodextrins.. Dual chitinase/transglycosylase that plays a role in cell wall architecture. Chitinase and transglycosylase activities are coupled. Required for the polysaccharide cross-linking at the septa and the cell wall. More specifically, transfers chitin to 1,6-beta-glucan in the cell wall. The chain is Crh-like protein 1 from Aspergillus fumigatus (strain ATCC MYA-4609 / CBS 101355 / FGSC A1100 / Af293) (Neosartorya fumigata).